A 272-amino-acid chain; its full sequence is Dermonecrotic toxin LvSicTox-alphaIC1biii (272 aa).

The active site involves His5. Mg(2+)-binding residues include Glu25 and Asp27. Residue His41 is the Nucleophile of the active site. 2 disulfide bridges follow: Cys45-Cys51 and Cys47-Cys189. Asp84 is a binding site for Mg(2+).

This sequence belongs to the arthropod phospholipase D family. Class II subfamily. The cofactor is Mg(2+). As to expression, expressed by the venom gland.

Its subcellular location is the secreted. The enzyme catalyses an N-(acyl)-sphingosylphosphocholine = an N-(acyl)-sphingosyl-1,3-cyclic phosphate + choline. The catalysed reaction is an N-(acyl)-sphingosylphosphoethanolamine = an N-(acyl)-sphingosyl-1,3-cyclic phosphate + ethanolamine. It carries out the reaction a 1-acyl-sn-glycero-3-phosphocholine = a 1-acyl-sn-glycero-2,3-cyclic phosphate + choline. It catalyses the reaction a 1-acyl-sn-glycero-3-phosphoethanolamine = a 1-acyl-sn-glycero-2,3-cyclic phosphate + ethanolamine. In terms of biological role, dermonecrotic toxins cleave the phosphodiester linkage between the phosphate and headgroup of certain phospholipids (sphingolipid and lysolipid substrates), forming an alcohol (often choline) and a cyclic phosphate. This toxin acts on sphingomyelin (SM). It may also act on ceramide phosphoethanolamine (CPE), lysophosphatidylcholine (LPC) and lysophosphatidylethanolamine (LPE), but not on lysophosphatidylserine (LPS), and lysophosphatidylglycerol (LPG). It acts by transphosphatidylation, releasing exclusively cyclic phosphate products as second products. Induces dermonecrosis, hemolysis, increased vascular permeability, edema, inflammatory response, and platelet aggregation. The chain is Dermonecrotic toxin LvSicTox-alphaIC1biii from Loxosceles variegata (Recluse spider).